Here is an 88-residue protein sequence, read N- to C-terminus: Large ribosomal subunit protein bL31B (88 aa).

The protein belongs to the bacterial ribosomal protein bL31 family. Type B subfamily. In terms of assembly, part of the 50S ribosomal subunit.

This chain is Large ribosomal subunit protein bL31B, found in Janthinobacterium sp. (strain Marseille) (Minibacterium massiliensis).